Reading from the N-terminus, the 103-residue chain is MDRVNRLAAQRAVVIFSMSSCCMCHTVTRLFCELGVNPTVVELDEDPRGKEMEKALARLLGRSPAVPAVFIGGRLVGSTDKVMSLHLSGNLVPLLRNAGALWV.

One can recognise a Glutaredoxin domain in the interval 1-102; it reads MDRVNRLAAQ…PLLRNAGALW (102 aa). A disulfide bond links Cys21 and Cys24.

It belongs to the glutaredoxin family. CC-type subfamily.

Its subcellular location is the cytoplasm. Has a glutathione-disulfide oxidoreductase activity in the presence of NADPH and glutathione reductase. Reduces low molecular weight disulfides and proteins. The polypeptide is Glutaredoxin-C1 (GRXC1) (Oryza sativa subsp. japonica (Rice)).